The primary structure comprises 250 residues: Ubiquinone/menaquinone biosynthesis C-methyltransferase UbiE (250 aa).

S-adenosyl-L-methionine is bound by residues threonine 74, aspartate 94, 122–123, and serine 139; that span reads DA.

The protein belongs to the class I-like SAM-binding methyltransferase superfamily. MenG/UbiE family.

It catalyses the reaction a 2-demethylmenaquinol + S-adenosyl-L-methionine = a menaquinol + S-adenosyl-L-homocysteine + H(+). The catalysed reaction is a 2-methoxy-6-(all-trans-polyprenyl)benzene-1,4-diol + S-adenosyl-L-methionine = a 5-methoxy-2-methyl-3-(all-trans-polyprenyl)benzene-1,4-diol + S-adenosyl-L-homocysteine + H(+). It participates in quinol/quinone metabolism; menaquinone biosynthesis; menaquinol from 1,4-dihydroxy-2-naphthoate: step 2/2. The protein operates within cofactor biosynthesis; ubiquinone biosynthesis. Functionally, methyltransferase required for the conversion of demethylmenaquinol (DMKH2) to menaquinol (MKH2) and the conversion of 2-polyprenyl-6-methoxy-1,4-benzoquinol (DDMQH2) to 2-polyprenyl-3-methyl-6-methoxy-1,4-benzoquinol (DMQH2). The sequence is that of Ubiquinone/menaquinone biosynthesis C-methyltransferase UbiE from Cereibacter sphaeroides (strain ATCC 17029 / ATH 2.4.9) (Rhodobacter sphaeroides).